Here is a 189-residue protein sequence, read N- to C-terminus: GMP synthase [glutamine-hydrolyzing] subunit A (189 aa).

Residues 1–189 (MIVILNNGGQ…CKKCGFEFEE (189 aa)) form the Glutamine amidotransferase type-1 domain. The active-site Nucleophile is the Cys76. Residues His163 and Glu165 contribute to the active site.

As to quaternary structure, heterodimer composed of a glutamine amidotransferase subunit (A) and a GMP-binding subunit (B).

The enzyme catalyses XMP + L-glutamine + ATP + H2O = GMP + L-glutamate + AMP + diphosphate + 2 H(+). Its pathway is purine metabolism; GMP biosynthesis; GMP from XMP (L-Gln route): step 1/1. Its function is as follows. Catalyzes the synthesis of GMP from XMP. The chain is GMP synthase [glutamine-hydrolyzing] subunit A from Methanococcus maripaludis (strain C5 / ATCC BAA-1333).